Reading from the N-terminus, the 359-residue chain is Molybdenum import ATP-binding protein ModC (359 aa).

The ABC transporter domain maps to Met-1 to Val-233. Gly-32 to Thr-39 is a binding site for ATP. Residues Ala-289 to Ala-355 enclose the Mop domain.

The protein belongs to the ABC transporter superfamily. Molybdate importer (TC 3.A.1.8) family. As to quaternary structure, the complex is composed of two ATP-binding proteins (ModC), two transmembrane proteins (ModB) and a solute-binding protein (ModA).

It localises to the cell inner membrane. The enzyme catalyses molybdate(out) + ATP + H2O = molybdate(in) + ADP + phosphate + H(+). In terms of biological role, part of the ABC transporter complex ModABC involved in molybdenum import. Responsible for energy coupling to the transport system. This is Molybdenum import ATP-binding protein ModC from Brucella abortus (strain 2308).